The primary structure comprises 460 residues: Bifunctional protein GlmU (460 aa).

Positions Met1–Arg235 are pyrophosphorylase. UDP-N-acetyl-alpha-D-glucosamine contacts are provided by residues Leu9 to Gly12, Lys23, Gln76, and Gly81 to Thr82. Mg(2+) is bound at residue Asp109. Gly146, Glu161, Asn176, and Asn233 together coordinate UDP-N-acetyl-alpha-D-glucosamine. Asn233 is a Mg(2+) binding site. Positions Val236–Asn256 are linker. The tract at residues Gly257–Arg460 is N-acetyltransferase. Positions 338 and 356 each coordinate UDP-N-acetyl-alpha-D-glucosamine. His368 acts as the Proton acceptor in catalysis. The UDP-N-acetyl-alpha-D-glucosamine site is built by Tyr371 and Asn382. Residues Asn391–Tyr392 and Ala428 each bind acetyl-CoA.

This sequence in the N-terminal section; belongs to the N-acetylglucosamine-1-phosphate uridyltransferase family. It in the C-terminal section; belongs to the transferase hexapeptide repeat family. In terms of assembly, homotrimer. Mg(2+) serves as cofactor.

The protein resides in the cytoplasm. The catalysed reaction is alpha-D-glucosamine 1-phosphate + acetyl-CoA = N-acetyl-alpha-D-glucosamine 1-phosphate + CoA + H(+). The enzyme catalyses N-acetyl-alpha-D-glucosamine 1-phosphate + UTP + H(+) = UDP-N-acetyl-alpha-D-glucosamine + diphosphate. Its pathway is nucleotide-sugar biosynthesis; UDP-N-acetyl-alpha-D-glucosamine biosynthesis; N-acetyl-alpha-D-glucosamine 1-phosphate from alpha-D-glucosamine 6-phosphate (route II): step 2/2. It functions in the pathway nucleotide-sugar biosynthesis; UDP-N-acetyl-alpha-D-glucosamine biosynthesis; UDP-N-acetyl-alpha-D-glucosamine from N-acetyl-alpha-D-glucosamine 1-phosphate: step 1/1. It participates in bacterial outer membrane biogenesis; LPS lipid A biosynthesis. Catalyzes the last two sequential reactions in the de novo biosynthetic pathway for UDP-N-acetylglucosamine (UDP-GlcNAc). The C-terminal domain catalyzes the transfer of acetyl group from acetyl coenzyme A to glucosamine-1-phosphate (GlcN-1-P) to produce N-acetylglucosamine-1-phosphate (GlcNAc-1-P), which is converted into UDP-GlcNAc by the transfer of uridine 5-monophosphate (from uridine 5-triphosphate), a reaction catalyzed by the N-terminal domain. The chain is Bifunctional protein GlmU from Bifidobacterium longum subsp. infantis (strain ATCC 15697 / DSM 20088 / JCM 1222 / NCTC 11817 / S12).